A 93-amino-acid chain; its full sequence is Putative pterin-4-alpha-carbinolamine dehydratase (93 aa).

This sequence belongs to the pterin-4-alpha-carbinolamine dehydratase family.

The enzyme catalyses (4aS,6R)-4a-hydroxy-L-erythro-5,6,7,8-tetrahydrobiopterin = (6R)-L-erythro-6,7-dihydrobiopterin + H2O. This chain is Putative pterin-4-alpha-carbinolamine dehydratase, found in Synechococcus sp. (strain WH7803).